Here is a 703-residue protein sequence, read N- to C-terminus: Putative glycosyl hydrolase ecdE (703 aa).

The first 21 residues, 1–21 (MKLNIFASAILLCTSAFPVAA), serve as a signal peptide directing secretion. D47 is a catalytic residue. N-linked (GlcNAc...) asparagine glycans are attached at residues N104, N120, N293, N397, N443, and N641.

The protein belongs to the glycosyl hydrolase 32 family.

This chain is Putative glycosyl hydrolase ecdE, found in Aspergillus rugulosus (Emericella rugulosa).